The sequence spans 89 residues: Cell division protein ZapA (89 aa).

The protein belongs to the ZapA family. Type 2 subfamily. In terms of assembly, homodimer. Interacts with FtsZ.

It is found in the cytoplasm. Its function is as follows. Activator of cell division through the inhibition of FtsZ GTPase activity, therefore promoting FtsZ assembly into bundles of protofilaments necessary for the formation of the division Z ring. It is recruited early at mid-cell but it is not essential for cell division. This chain is Cell division protein ZapA, found in Bacillus mycoides (strain KBAB4) (Bacillus weihenstephanensis).